Reading from the N-terminus, the 522-residue chain is Serine/threonine-protein kinase pak-2 (522 aa).

A CRIB domain is found at 16–29 (ISTPSNFEHRIHAG). Over residues 183-204 (TTTPQLQPKSPSTPQAMRQQPK) the composition is skewed to polar residues. The interval 183–208 (TTTPQLQPKSPSTPQAMRQQPKCTEG) is disordered. The 252-residue stretch at 231–482 (LTDYKQIGEG…AKDLLRHPFF (252 aa)) folds into the Protein kinase domain. ATP-binding positions include 237–245 (IGEGSTGVV) and lysine 260. The active-site Proton acceptor is the aspartate 350.

It belongs to the protein kinase superfamily. STE Ser/Thr protein kinase family. STE20 subfamily. Mg(2+) serves as cofactor. Requires Mn(2+) as cofactor. Expressed in pharynx, vulva and spermatheca. Unlike other p21-activated kinases, expression is not detected in neurons.

The catalysed reaction is L-seryl-[protein] + ATP = O-phospho-L-seryl-[protein] + ADP + H(+). It catalyses the reaction L-threonyl-[protein] + ATP = O-phospho-L-threonyl-[protein] + ADP + H(+). Its function is as follows. Serine/threonine-protein kinase which plays a redundant role with pak-1 in embryogenesis but, in contrast to pak-1, is not involved in commissural axon guidance of ventral cord motoneurons or in distal tip cell (DTC) migration. The polypeptide is Serine/threonine-protein kinase pak-2 (Caenorhabditis elegans).